The chain runs to 505 residues: Histidine ammonia-lyase (505 aa).

The 5-imidazolinone (Ala-Gly) cross-link spans A144–G146. S145 carries the 2,3-didehydroalanine (Ser) modification.

The protein belongs to the PAL/histidase family. Post-translationally, contains an active site 4-methylidene-imidazol-5-one (MIO), which is formed autocatalytically by cyclization and dehydration of residues Ala-Ser-Gly.

It localises to the cytoplasm. The enzyme catalyses L-histidine = trans-urocanate + NH4(+). It participates in amino-acid degradation; L-histidine degradation into L-glutamate; N-formimidoyl-L-glutamate from L-histidine: step 1/3. The protein is Histidine ammonia-lyase of Legionella pneumophila (strain Corby).